We begin with the raw amino-acid sequence, 284 residues long: ELMO domain-containing protein B (284 aa).

Residues 124-276 (EHEASLERLW…EFETKISQNS (153 aa)) form the ELMO domain.

The chain is ELMO domain-containing protein B (elmoB) from Dictyostelium discoideum (Social amoeba).